We begin with the raw amino-acid sequence, 606 residues long: Zinc finger protein 214 (606 aa).

In terms of domain architecture, KRAB spans valine 3–tyrosine 83. The segment at tyrosine 275–histidine 297 adopts a C2H2-type 1; degenerate zinc-finger fold. The C2H2-type 2 zinc-finger motif lies at tyrosine 303–histidine 325. Residues phenylalanine 330–histidine 352 form a C2H2-type 3; degenerate zinc finger. C2H2-type zinc fingers lie at residues phenylalanine 358 to histidine 380, tyrosine 386 to histidine 408, tyrosine 414 to histidine 436, tyrosine 442 to histidine 464, tyrosine 470 to histidine 492, tyrosine 498 to histidine 520, tyrosine 526 to histidine 548, and tyrosine 554 to histidine 576.

It belongs to the krueppel C2H2-type zinc-finger protein family.

It is found in the nucleus. Functionally, may be involved in transcriptional regulation. The chain is Zinc finger protein 214 (ZNF214) from Homo sapiens (Human).